The sequence spans 39 residues: Phospholipase A2 (39 aa).

The active site involves His-36.

This sequence belongs to the phospholipase A2 family. Group III subfamily. Ca(2+) serves as cofactor. In terms of tissue distribution, expressed by the venom gland.

Its subcellular location is the secreted. It carries out the reaction a 1,2-diacyl-sn-glycero-3-phosphocholine + H2O = a 1-acyl-sn-glycero-3-phosphocholine + a fatty acid + H(+). In terms of biological role, PLA2 catalyzes the calcium-dependent hydrolysis of the 2-acyl groups in 3-sn-phosphoglycerides. In Heloderma horridum horridum (Mexican beaded lizard), this protein is Phospholipase A2.